The sequence spans 283 residues: Pantothenate synthetase (283 aa).

Residue 30–37 (MGNLHLGH) coordinates ATP. H37 functions as the Proton donor in the catalytic mechanism. Position 61 (Q61) interacts with (R)-pantoate. A beta-alanine-binding site is contributed by Q61. 149 to 152 (GQKD) provides a ligand contact to ATP. Q155 lines the (R)-pantoate pocket. ATP is bound by residues I178 and 186-189 (MSSR).

The protein belongs to the pantothenate synthetase family. Homodimer.

The protein localises to the cytoplasm. The enzyme catalyses (R)-pantoate + beta-alanine + ATP = (R)-pantothenate + AMP + diphosphate + H(+). It participates in cofactor biosynthesis; (R)-pantothenate biosynthesis; (R)-pantothenate from (R)-pantoate and beta-alanine: step 1/1. Catalyzes the condensation of pantoate with beta-alanine in an ATP-dependent reaction via a pantoyl-adenylate intermediate. The polypeptide is Pantothenate synthetase (Shewanella halifaxensis (strain HAW-EB4)).